A 325-amino-acid chain; its full sequence is uncharacterized protein (325 aa).

Polar residues-rich tracts occupy residues 1-21 (MSYQQRANDSMNSAKQYSSSA) and 29-57 (EPFSSSGAPQNRNFDTSYTSEIPSNSSRA). A disordered region spans residues 1–325 (MSYQQRANDS…LKTGHHSERY (325 aa)). Positions 86–109 (ESRKKEQSDVRGGDTSYSRRHDDS) are enriched in basic and acidic residues. 2 stretches are compositionally biased toward polar residues: residues 114–167 (NKYS…TTQG) and 174–193 (YSQSYPTDTYGSRQKATPSD). 2 stretches are compositionally biased toward low complexity: residues 200–210 (YDYSSSGSHTH) and 252–278 (ATDTTAEANRRAATGTRNARTTAQRNA). A compositionally biased stretch (basic and acidic residues) spans 282–325 (EDEHVSMGDKMKGNMEKMAGKLTRDPELVQKGEDLKTGHHSERY).

This is an uncharacterized protein from Schizosaccharomyces pombe (strain 972 / ATCC 24843) (Fission yeast).